Here is a 156-residue protein sequence, read N- to C-terminus: Small ribosomal subunit protein uS7 (156 aa).

The protein belongs to the universal ribosomal protein uS7 family. In terms of assembly, part of the 30S ribosomal subunit. Contacts proteins S9 and S11.

In terms of biological role, one of the primary rRNA binding proteins, it binds directly to 16S rRNA where it nucleates assembly of the head domain of the 30S subunit. Is located at the subunit interface close to the decoding center, probably blocks exit of the E-site tRNA. The protein is Small ribosomal subunit protein uS7 of Solidesulfovibrio magneticus (strain ATCC 700980 / DSM 13731 / RS-1) (Desulfovibrio magneticus).